We begin with the raw amino-acid sequence, 334 residues long: Nucleoid-associated protein YPTS_1390 (334 aa).

It belongs to the YejK family.

Its subcellular location is the cytoplasm. It localises to the nucleoid. In Yersinia pseudotuberculosis serotype IB (strain PB1/+), this protein is Nucleoid-associated protein YPTS_1390.